The following is a 237-amino-acid chain: Putative N-acetylmannosamine-6-phosphate 2-epimerase (237 aa).

Belongs to the NanE family.

The enzyme catalyses an N-acyl-D-glucosamine 6-phosphate = an N-acyl-D-mannosamine 6-phosphate. Its pathway is amino-sugar metabolism; N-acetylneuraminate degradation; D-fructose 6-phosphate from N-acetylneuraminate: step 3/5. Its function is as follows. Converts N-acetylmannosamine-6-phosphate (ManNAc-6-P) to N-acetylglucosamine-6-phosphate (GlcNAc-6-P). This Listeria monocytogenes serovar 1/2a (strain ATCC BAA-679 / EGD-e) protein is Putative N-acetylmannosamine-6-phosphate 2-epimerase.